The primary structure comprises 392 residues: uncharacterized protein (392 aa).

It belongs to the chlamydial CPn_0675/CT_696/TC_0068 family.

This is an uncharacterized protein from Chlamydia muridarum (strain MoPn / Nigg).